The primary structure comprises 141 residues: Hemoglobin subunit alpha (141 aa).

Positions 1 to 141 (VLSASDKTNL…VSTVLTSKYR (141 aa)) constitute a Globin domain. The residue at position 3 (serine 3) is a Phosphoserine. Residue lysine 7 is modified to N6-succinyllysine. Threonine 8 carries the phosphothreonine modification. Lysine 11 is modified (N6-succinyllysine). Lysine 16 carries the N6-acetyllysine; alternate modification. Position 16 is an N6-succinyllysine; alternate (lysine 16). Tyrosine 24 is subject to Phosphotyrosine. Serine 35 is subject to Phosphoserine. At lysine 40 the chain carries N6-succinyllysine. Serine 49 is modified (phosphoserine). Residue histidine 58 participates in O2 binding. Histidine 87 is a heme b binding site. Residue serine 102 is modified to Phosphoserine. Threonine 108 bears the Phosphothreonine mark. Serine 124 carries the post-translational modification Phosphoserine. Threonine 134 and threonine 137 each carry phosphothreonine. Residue serine 138 is modified to Phosphoserine.

Belongs to the globin family. Heterotetramer of two alpha chains and two beta chains. In terms of tissue distribution, red blood cells.

Functionally, involved in oxygen transport from the lung to the various peripheral tissues. The chain is Hemoglobin subunit alpha from Blarina brevicauda (Northern short-tailed shrew).